The chain runs to 694 residues: Putative bifunctional polynucleotide kinase/RNA ligase (694 aa).

The segment at 1–385 is ligase domain; that stretch reads MLHVSRLLAN…TKQALNNKLA (385 aa). Positions 394–694 are bifunctional 5'-OH polynucleotide kinase/polynucleotide 3'-phosphatase; it reads KQLLVLIGIS…FNVCRDYLEF (301 aa). 401–408 contacts ATP; sequence GISGSGKS.

It carries out the reaction a 5'-end dephospho-2'-deoxyribonucleoside-DNA + ATP = a 5'-end 5'-phospho-2'-deoxyribonucleoside-DNA + ADP + H(+). The enzyme catalyses ATP + (ribonucleotide)n-3'-hydroxyl + 5'-phospho-(ribonucleotide)m = (ribonucleotide)n+m + AMP + diphosphate.. Trifunctional enzyme that possesses a bifunctional polynucleotide kinase/phosphatase activity and an ATP-dependent RNA ligase activity. May therefore play a role to evade an RNA damage-based host response. The protein is Putative bifunctional polynucleotide kinase/RNA ligase (PNK/PNL) of Autographa californica nuclear polyhedrosis virus (AcMNPV).